Here is a 616-residue protein sequence, read N- to C-terminus: MALLQISEPGLSAAPHQRRLAAGIDLGTTNSLVATVRSGQAETLADHEGRHLLPSVVHYQQQGHSVGYDARTNAALDTANTISSVKRLMGRSLADIQQRYPHLPYQFQASENGLPMIETAAGLLNPVRVSADILKALAARATEALAGELDGVVITVPAYFDDAQRQGTKDAARLAGLHVLRLLNEPTAAAIAYGLDSGQEGVIAVYDLGGGTFDISILRLSRGVFEVLATGGDSALGGDDFDHLLADYIREQAGIPDRSDNRVQRELLDAAIAAKIALSDAVSVTVNVAGWQGEISREQFNELIAPLVKRTLLACRRALKDAGVEADEVLEVVMVGGSTRVPLVRERVGEFFGRPPLTSIDPDKVVAIGAAIQADILVGNKPDSEMLLLDVIPLSLGLETMGGLVEKVIPRNTTIPVARAQDFTTFKDGQMAMSIHVMQGERELVQDCRSLARFALRGIPALPAGGAHIRVTFQVDADGLLSVTAMEKSTGVEASIQVKPSYGLTDSEIASMIKDSMSYAEQDVKARMLAEQKVEAARVLESLHGALAADAALLSAAERQVIDNAAAHLSEVAQGDDVDAIEQAIKNVDKQTQDFAARRMDQSVRRALKGHSVDEV.

This sequence belongs to the heat shock protein 70 family.

In terms of biological role, chaperone involved in the maturation of iron-sulfur cluster-containing proteins. Has a low intrinsic ATPase activity which is markedly stimulated by HscB. Involved in the maturation of IscU. This Escherichia coli O7:K1 (strain IAI39 / ExPEC) protein is Chaperone protein HscA.